Reading from the N-terminus, the 127-residue chain is Large ribosomal subunit protein bL12 (127 aa).

It belongs to the bacterial ribosomal protein bL12 family. In terms of assembly, homodimer. Part of the ribosomal stalk of the 50S ribosomal subunit. Forms a multimeric L10(L12)X complex, where L10 forms an elongated spine to which 2 to 4 L12 dimers bind in a sequential fashion. Binds GTP-bound translation factors.

Functionally, forms part of the ribosomal stalk which helps the ribosome interact with GTP-bound translation factors. Is thus essential for accurate translation. The protein is Large ribosomal subunit protein bL12 of Streptomyces griseus subsp. griseus (strain JCM 4626 / CBS 651.72 / NBRC 13350 / KCC S-0626 / ISP 5235).